The primary structure comprises 662 residues: uncharacterized protein (662 aa).

A run of 16 helical transmembrane segments spans residues 10–30 (SSIV…GWPV), 46–66 (PVIG…FLPI), 68–88 (AINL…LSKG), 101–121 (GFCW…EIIP), 167–187 (LIYY…TGAT), 193–213 (IALT…LAVA), 217–237 (SAYA…KPAV), 263–283 (PWVP…MAYL), 285–305 (ILYS…AILA), 312–332 (MWAG…LSVS), 342–362 (EVLI…AVLI), 373–393 (KVVE…LDIP), 394–414 (GFWL…FLIW), 432–452 (ALTV…SVIM), 460–480 (VLIP…STTI), and 485–505 (LVGR…ILVG).

Its subcellular location is the cell membrane. This is an uncharacterized protein from Sinorhizobium fredii (strain NBRC 101917 / NGR234).